We begin with the raw amino-acid sequence, 201 residues long: LexA repressor (201 aa).

A DNA-binding region (H-T-H motif) is located at residues 27–47 (RMEISSAFGFASPNAAEDHLK). Residues Ser-116 and Lys-153 each act as for autocatalytic cleavage activity in the active site.

This sequence belongs to the peptidase S24 family. Homodimer.

It catalyses the reaction Hydrolysis of Ala-|-Gly bond in repressor LexA.. Functionally, represses a number of genes involved in the response to DNA damage (SOS response), including recA and lexA. In the presence of single-stranded DNA, RecA interacts with LexA causing an autocatalytic cleavage which disrupts the DNA-binding part of LexA, leading to derepression of the SOS regulon and eventually DNA repair. The protein is LexA repressor of Dechloromonas aromatica (strain RCB).